A 101-amino-acid chain; its full sequence is Large ribosomal subunit protein uL23 (101 aa).

It belongs to the universal ribosomal protein uL23 family. As to quaternary structure, part of the 50S ribosomal subunit. Contacts protein L29, and trigger factor when it is bound to the ribosome.

In terms of biological role, one of the early assembly proteins it binds 23S rRNA. One of the proteins that surrounds the polypeptide exit tunnel on the outside of the ribosome. Forms the main docking site for trigger factor binding to the ribosome. This Thiobacillus denitrificans (strain ATCC 25259 / T1) protein is Large ribosomal subunit protein uL23.